A 347-amino-acid polypeptide reads, in one-letter code: D-alanine--D-alanine ligase (347 aa).

The ATP-grasp domain occupies K131 to D333. E161–E216 provides a ligand contact to ATP. Residues D287, E300, and N302 each coordinate Mg(2+).

It belongs to the D-alanine--D-alanine ligase family. The cofactor is Mg(2+). Requires Mn(2+) as cofactor.

It is found in the cytoplasm. It carries out the reaction 2 D-alanine + ATP = D-alanyl-D-alanine + ADP + phosphate + H(+). The protein operates within cell wall biogenesis; peptidoglycan biosynthesis. Functionally, cell wall formation. The protein is D-alanine--D-alanine ligase of Streptococcus pneumoniae (strain ATCC BAA-255 / R6).